The following is a 275-amino-acid chain: MYLRRALIAGGSAAAAILGVVAAGKSKGGSDSEILSVAPPATGQWDRNWDRREPISMVNLSKINAETGEEELQLHLNKHKPKATRHIFLIRHSQYKLDGKTDFDRVLTPLGREQADLTGQRLASLGHKYNHIVYSTMTRAKETTEIISKYLPDVNKSSSDLLREGAPIRPEPQVCHWKPDFVYYEDGPRIEAAFRHFIHRADPKQEEDSYEILICHANVIRYVVCRALQFPPEAWLRISLNNGSITYLVIRPNGNVSIRMLGDSGFMPAEKISRT.

A helical membrane pass occupies residues 7-24 (LIAGGSAAAAILGVVAAG).

Belongs to the phosphoglycerate mutase family. BPG-dependent PGAM subfamily. Post-translationally, phosphorylated by the RIPK1/RIPK3 complex under necrotic conditions. This phosphorylation increases PGAM5 phosphatase activity.

The protein resides in the mitochondrion outer membrane. The enzyme catalyses O-phospho-L-seryl-[protein] + H2O = L-seryl-[protein] + phosphate. It catalyses the reaction O-phospho-L-threonyl-[protein] + H2O = L-threonyl-[protein] + phosphate. Displays phosphatase activity for serine/threonine residues. Has apparently no phosphoglycerate mutase activity. May be regulator of mitochondrial dynamics. May be a central mediator for programmed necrosis. The sequence is that of Serine/threonine-protein phosphatase PGAM5, mitochondrial (pgam5) from Xenopus laevis (African clawed frog).